The chain runs to 543 residues: ADIPOR-like receptor IZH3 (543 aa).

Residues 1-259 lie on the Lumenal side of the membrane; the sequence is MMDSSSKSLT…NWYGWHNETS (259 aa). Residues Asn-45, Asn-123, Asn-153, and Asn-256 are each glycosylated (N-linked (GlcNAc...) asparagine). The chain crosses the membrane as a helical span at residues 260–280; it reads NIWSHLLGAIYIIYLAIYDFP. Residues 281–295 are Cytoplasmic-facing; sequence QSEVWRNSQVPPQAR. Residues 296 to 316 traverse the membrane as a helical segment; the sequence is WIVFMFLAAALKCMLSSVFWH. The Lumenal segment spans residues 317-330; the sequence is TFNGTSFLKLRSKF. N-linked (GlcNAc...) asparagine glycosylation is present at Asn-319. Residues 331 to 353 traverse the membrane as a helical segment; that stretch reads ACVDYSGITILITASILTTEFVT. At 354–357 the chain is on the cytoplasmic side; sequence MYSC. Residues 358 to 378 traverse the membrane as a helical segment; that stretch reads YWAMYTYMSISLALGVFGVFM. Residues 379–395 lie on the Lumenal side of the membrane; the sequence is NWSPRFDRPEARPLRIR. The helical transmembrane segment at 396 to 416 threads the bilayer; it reads FFILLATMGVLSFLHLIFLTD. The Cytoplasmic segment spans residues 417–425; it reads LHYAATLFS. The chain crosses the membrane as a helical span at residues 426 to 446; the sequence is PVTYKSVVWYLVGVVFYGSFI. Residues 447 to 505 are Lumenal-facing; the sequence is PERFRSDVQVDKTIPTNYELSTDLEIITKQREIHFREVPTAHSKCSSCPSHAKSFKSLW. A helical transmembrane segment spans residues 506-526; that stretch reads WVDYFGCSHTFWHFFVVLGVI. Topologically, residues 527 to 543 are cytoplasmic; it reads GHYRAILDMFAKRWILS.

It belongs to the ADIPOR family.

The protein localises to the endoplasmic reticulum membrane. In terms of biological role, ADIPOR-like receptor involved in zinc metabolism either by altering membrane sterol content or by directly altering cellular zinc levels. This is ADIPOR-like receptor IZH3 (IZH3) from Saccharomyces cerevisiae (strain ATCC 204508 / S288c) (Baker's yeast).